A 48-amino-acid polypeptide reads, in one-letter code: Delta-actitoxin-Bcg1b (48 aa).

Intrachain disulfides connect C4–C45, C6–C35, and C28–C46.

The protein belongs to the sea anemone sodium channel inhibitory toxin family. Type I subfamily.

The protein localises to the secreted. It localises to the nematocyst. Its function is as follows. Binds to the sodium channels Nav1.1/SCN1A (EC(50)=165 nM), Nav1.5/SCN5A (EC(50)=103 nM) and Nav1.6/SCN8A (EC(50)=133 nM), thereby delaying their inactivation. Also inhibits Nav1.2/SCN2A, Nav1.3/SCN3A, and Nav1.4/SCN4A, but to a lesser extent. Inhibits Nav1.5 differently from isoforms Nav1.1 and Nav1.6. In Nav1.5 the effect consists in a right-shift of inactivation; whereas in both Nav1.1 and Nav1.6 the effect consists in an incomplete inactivation. The polypeptide is Delta-actitoxin-Bcg1b (Bunodosoma cangicum (Sea anemone)).